The primary structure comprises 142 residues: Small ribosomal subunit protein uS12 (142 aa).

Belongs to the universal ribosomal protein uS12 family. In terms of assembly, part of the 30S ribosomal subunit.

Its function is as follows. With S4 and S5 plays an important role in translational accuracy. Located at the interface of the 30S and 50S subunits. This is Small ribosomal subunit protein uS12 from Archaeoglobus fulgidus (strain ATCC 49558 / DSM 4304 / JCM 9628 / NBRC 100126 / VC-16).